The sequence spans 138 residues: Small ribosomal subunit protein uS12m (138 aa).

The transit peptide at 1–29 (MSWSGLLHGLNTSLTCGPALVPRLWATCS) directs the protein to the mitochondrion. Positions 36–56 (MHRLGPPKRPPRKLGPTEGRP) are disordered.

This sequence belongs to the universal ribosomal protein uS12 family. Component of the mitochondrial small ribosomal subunit (mt-SSU). Mature mammalian 55S mitochondrial ribosomes consist of a small (28S) and a large (39S) subunit. The 28S small subunit contains a 12S ribosomal RNA (12S mt-rRNA) and 30 different proteins. The 39S large subunit contains a 16S rRNA (16S mt-rRNA), a copy of mitochondrial valine transfer RNA (mt-tRNA(Val)), which plays an integral structural role, and 52 different proteins.

Its subcellular location is the mitochondrion. In Homo sapiens (Human), this protein is Small ribosomal subunit protein uS12m (MRPS12).